Consider the following 363-residue polypeptide: Glutamate 5-kinase (363 aa).

Lysine 6 contributes to the ATP binding site. The substrate site is built by serine 46, aspartate 133, and asparagine 145. Residues 165-166 and 207-213 contribute to the ATP site; these read TD and TGGMHTK. Residues 271–349 form the PUA domain; it reads HGRLLLDGGA…REIEALLGYT (79 aa).

The protein belongs to the glutamate 5-kinase family.

Its subcellular location is the cytoplasm. It catalyses the reaction L-glutamate + ATP = L-glutamyl 5-phosphate + ADP. Its pathway is amino-acid biosynthesis; L-proline biosynthesis; L-glutamate 5-semialdehyde from L-glutamate: step 1/2. In terms of biological role, catalyzes the transfer of a phosphate group to glutamate to form L-glutamate 5-phosphate. The protein is Glutamate 5-kinase of Deinococcus radiodurans (strain ATCC 13939 / DSM 20539 / JCM 16871 / CCUG 27074 / LMG 4051 / NBRC 15346 / NCIMB 9279 / VKM B-1422 / R1).